A 751-amino-acid chain; its full sequence is Meiotic sister-chromatid recombination protein 3 (751 aa).

Disordered stretches follow at residues Gly-54 to Ser-88, Leu-216 to Met-290, Pro-314 to Phe-410, Thr-431 to Phe-504, and Lys-558 to Gln-610. Residues Leu-216 to Leu-228 are compositionally biased toward low complexity. Basic and acidic residues-rich tracts occupy residues Glu-345–Lys-356 and Glu-384–Leu-393. A compositionally biased stretch (polar residues) spans Thr-431 to Lys-496. Residues Arg-596–Pro-609 are compositionally biased toward low complexity.

It is found in the cell membrane. Functionally, may be involved in the control of meiotic sister-chromatid recombination. In Eremothecium gossypii (strain ATCC 10895 / CBS 109.51 / FGSC 9923 / NRRL Y-1056) (Yeast), this protein is Meiotic sister-chromatid recombination protein 3 (MSC3).